The chain runs to 372 residues: tRNA-specific 2-thiouridylase MnmA (372 aa).

ATP-binding positions include 16–23 (GMSGGVDS) and Met42. Residues 102–104 (NPD) form an interaction with target base in tRNA region. The active-site Nucleophile is Cys107. A disulfide bridge connects residues Cys107 and Cys205. An ATP-binding site is contributed by Gly132. The segment at 155-157 (KDQ) is interaction with tRNA. The active-site Cysteine persulfide intermediate is the Cys205. An interaction with tRNA region spans residues 317 to 318 (RY).

This sequence belongs to the MnmA/TRMU family.

The protein resides in the cytoplasm. It carries out the reaction S-sulfanyl-L-cysteinyl-[protein] + uridine(34) in tRNA + AH2 + ATP = 2-thiouridine(34) in tRNA + L-cysteinyl-[protein] + A + AMP + diphosphate + H(+). In terms of biological role, catalyzes the 2-thiolation of uridine at the wobble position (U34) of tRNA, leading to the formation of s(2)U34. The polypeptide is tRNA-specific 2-thiouridylase MnmA (Shewanella sp. (strain MR-7)).